We begin with the raw amino-acid sequence, 191 residues long: Negative modulator of initiation of replication (191 aa).

The tract at residues 96 to 97 (AV) is interaction with DNA.

This sequence belongs to the SeqA family. As to quaternary structure, homodimer. Polymerizes to form helical filaments.

The protein localises to the cytoplasm. Negative regulator of replication initiation, which contributes to regulation of DNA replication and ensures that replication initiation occurs exactly once per chromosome per cell cycle. Binds to pairs of hemimethylated GATC sequences in the oriC region, thus preventing assembly of replication proteins and re-initiation at newly replicated origins. Repression is relieved when the region becomes fully methylated. In Shewanella amazonensis (strain ATCC BAA-1098 / SB2B), this protein is Negative modulator of initiation of replication.